A 522-amino-acid chain; its full sequence is Probable cytochrome P450 12e1, mitochondrial (522 aa).

Cysteine 468 contacts heme.

It belongs to the cytochrome P450 family. The cofactor is heme.

It is found in the mitochondrion membrane. The chain is Probable cytochrome P450 12e1, mitochondrial (Cyp12e1) from Drosophila melanogaster (Fruit fly).